The chain runs to 257 residues: Achaete-scute complex protein T3 (257 aa).

In terms of domain architecture, bHLH spans 83 to 145; sequence PSVARRNARE…RIAVEYIRGL (63 aa). A disordered region spans residues 161–221; it reads YNSADESSND…SEISGGGYIK (61 aa). 2 stretches are compositionally biased toward low complexity: residues 165–184 and 193–213; these read DESS…LDSS and QSAQ…SGSE.

In terms of assembly, efficient DNA binding requires dimerization with another bHLH protein. As to expression, l(1)SC, SC and AC strongly label the presumptive stomatogastric nervous system, while ASE is more prominent in the presumptive procephalic lobe.

Functionally, AS-C proteins are involved in the determination of the neuronal precursors in the peripheral nervous system and the central nervous system. In Drosophila melanogaster (Fruit fly), this protein is Achaete-scute complex protein T3 (l(1)sc).